We begin with the raw amino-acid sequence, 240 residues long: UDP-2,3-diacylglucosamine hydrolase (240 aa).

Mn(2+) contacts are provided by Asp-8, His-10, Asp-41, Asn-79, and His-114. 79 to 80 contacts substrate; that stretch reads NR. Substrate is bound by residues Asp-122, Ser-160, Asn-164, Lys-167, and His-195. Mn(2+)-binding residues include His-195 and His-197.

The protein belongs to the LpxH family. Mn(2+) is required as a cofactor.

Its subcellular location is the cell inner membrane. The catalysed reaction is UDP-2-N,3-O-bis[(3R)-3-hydroxytetradecanoyl]-alpha-D-glucosamine + H2O = 2-N,3-O-bis[(3R)-3-hydroxytetradecanoyl]-alpha-D-glucosaminyl 1-phosphate + UMP + 2 H(+). The protein operates within glycolipid biosynthesis; lipid IV(A) biosynthesis; lipid IV(A) from (3R)-3-hydroxytetradecanoyl-[acyl-carrier-protein] and UDP-N-acetyl-alpha-D-glucosamine: step 4/6. Functionally, hydrolyzes the pyrophosphate bond of UDP-2,3-diacylglucosamine to yield 2,3-diacylglucosamine 1-phosphate (lipid X) and UMP by catalyzing the attack of water at the alpha-P atom. Involved in the biosynthesis of lipid A, a phosphorylated glycolipid that anchors the lipopolysaccharide to the outer membrane of the cell. The sequence is that of UDP-2,3-diacylglucosamine hydrolase from Salmonella typhi.